We begin with the raw amino-acid sequence, 225 residues long: ATP-dependent dethiobiotin synthetase BioD 1 (225 aa).

13 to 18 (EVGKTV) serves as a coordination point for ATP. Threonine 17 provides a ligand contact to Mg(2+). Lysine 38 is an active-site residue. Residue serine 42 participates in substrate binding. ATP is bound by residues aspartate 55, 116 to 119 (EGAG), 176 to 177 (ND), 205 to 207 (PWL), and glutamate 212. Mg(2+)-binding residues include aspartate 55 and glutamate 116.

Belongs to the dethiobiotin synthetase family. Homodimer. Requires Mg(2+) as cofactor.

It is found in the cytoplasm. It carries out the reaction (7R,8S)-7,8-diammoniononanoate + CO2 + ATP = (4R,5S)-dethiobiotin + ADP + phosphate + 3 H(+). It functions in the pathway cofactor biosynthesis; biotin biosynthesis; biotin from 7,8-diaminononanoate: step 1/2. In terms of biological role, catalyzes a mechanistically unusual reaction, the ATP-dependent insertion of CO2 between the N7 and N8 nitrogen atoms of 7,8-diaminopelargonic acid (DAPA, also called 7,8-diammoniononanoate) to form a ureido ring. The polypeptide is ATP-dependent dethiobiotin synthetase BioD 1 (Escherichia coli O157:H7).